The primary structure comprises 210 residues: FMN-dependent NADH:quinone oxidoreductase (210 aa).

Residues serine 10 and 16–18 (SRS) each bind FMN.

Belongs to the azoreductase type 1 family. As to quaternary structure, homodimer. The cofactor is FMN.

It catalyses the reaction 2 a quinone + NADH + H(+) = 2 a 1,4-benzosemiquinone + NAD(+). It carries out the reaction N,N-dimethyl-1,4-phenylenediamine + anthranilate + 2 NAD(+) = 2-(4-dimethylaminophenyl)diazenylbenzoate + 2 NADH + 2 H(+). Its function is as follows. Quinone reductase that provides resistance to thiol-specific stress caused by electrophilic quinones. Functionally, also exhibits azoreductase activity. Catalyzes the reductive cleavage of the azo bond in aromatic azo compounds to the corresponding amines. In Kineococcus radiotolerans (strain ATCC BAA-149 / DSM 14245 / SRS30216), this protein is FMN-dependent NADH:quinone oxidoreductase.